A 382-amino-acid polypeptide reads, in one-letter code: Ribonuclease D (382 aa).

One can recognise a 3'-5' exonuclease domain in the interval 4–169 (ITTTAELASV…DVFAALDADL (166 aa)). An HRDC domain is found at 208–289 (KPKDLAVMME…QRGLARDPRE (82 aa)).

The protein belongs to the RNase D family. A divalent metal cation serves as cofactor.

The protein localises to the cytoplasm. It catalyses the reaction Exonucleolytic cleavage that removes extra residues from the 3'-terminus of tRNA to produce 5'-mononucleotides.. Exonuclease involved in the 3' processing of various precursor tRNAs. Initiates hydrolysis at the 3'-terminus of an RNA molecule and releases 5'-mononucleotides. The protein is Ribonuclease D of Nitrobacter hamburgensis (strain DSM 10229 / NCIMB 13809 / X14).